Reading from the N-terminus, the 443-residue chain is Histone deacetylase 10, chloroplastic (443 aa).

The N-terminal 65 residues, 1–65, are a transit peptide targeting the chloroplast; it reads MEQLWVPSLP…PSHNGTSISD (65 aa). Residues 82–412 are histone deacetylase; it reads DAHILYCTSP…FRAFLGEPSL (331 aa). Residue histidine 222 is the Proton donor/acceptor of the active site. Positions 259, 261, and 346 each coordinate Zn(2+).

The protein belongs to the histone deacetylase family. The cofactor is Zn(2+). Expressed in leaves. Expressed in coleoptiles, leaves, flag leaves and flowers. Expressed at low levels in roots.

The protein localises to the plastid. It is found in the chloroplast. Its subcellular location is the mitochondrion. It carries out the reaction N-acetylserotonin + H2O = serotonin + acetate. It catalyses the reaction N-acetyltyramine + H2O = tyramine + acetate. The enzyme catalyses N-acetyltryptamine + H2O = tryptamine + acetate. The catalysed reaction is melatonin + H2O = 5-methoxytryptamine + acetate. Its activity is regulated as follows. The activity of this enzyme is not inhibited by butyrate, a well-known histone deacetylase inhibitor. Involved in the regulation of melatonin biosynthesis by catalyzing the deacetylation of N-acetylserotonin to produce serotonin. N-acetylserotonin is methylated by acetylserotonin O-methyltransferase (ASMT) to produce melatonin (N-acetyl-5-methoxytryptamine). Deacetylates melatonin to produce 5-methoxytryptamine. In vitro, deacetylates N-acetyltyramine and N-acetyltryptamine to produce tyramine and tryptamine, respectively. The sequence is that of Histone deacetylase 10, chloroplastic from Oryza sativa subsp. japonica (Rice).